A 145-amino-acid chain; its full sequence is 3-dehydroquinate dehydratase (145 aa).

The active-site Proton acceptor is the Tyr-23. Positions 73, 79, and 86 each coordinate substrate. The active-site Proton donor is His-99. Substrate-binding positions include Leu-100–Ser-101 and Arg-110.

This sequence belongs to the type-II 3-dehydroquinase family. In terms of assembly, homododecamer.

The enzyme catalyses 3-dehydroquinate = 3-dehydroshikimate + H2O. It functions in the pathway metabolic intermediate biosynthesis; chorismate biosynthesis; chorismate from D-erythrose 4-phosphate and phosphoenolpyruvate: step 3/7. Functionally, catalyzes a trans-dehydration via an enolate intermediate. The polypeptide is 3-dehydroquinate dehydratase (Desulfitobacterium hafniense (strain Y51)).